Consider the following 355-residue polypeptide: Holliday junction branch migration complex subunit RuvB (355 aa).

The tract at residues 4-190 (TDKLAAERII…FGIVARLEFY (187 aa)) is large ATPase domain (RuvB-L). ATP contacts are provided by residues Leu29, Arg30, Gly71, Lys74, Thr75, Thr76, 137–139 (EDY), Arg180, Tyr190, and Arg227. Thr75 serves as a coordination point for Mg(2+). A small ATPAse domain (RuvB-S) region spans residues 191 to 261 (DADQLSRIVQ…IADAALAMLD (71 aa)). A head domain (RuvB-H) region spans residues 264–355 (PVGFDLMDRK…QSIWDTPDAQ (92 aa)). The DNA site is built by Arg300, Arg319, and Arg324.

The protein belongs to the RuvB family. Homohexamer. Forms an RuvA(8)-RuvB(12)-Holliday junction (HJ) complex. HJ DNA is sandwiched between 2 RuvA tetramers; dsDNA enters through RuvA and exits via RuvB. An RuvB hexamer assembles on each DNA strand where it exits the tetramer. Each RuvB hexamer is contacted by two RuvA subunits (via domain III) on 2 adjacent RuvB subunits; this complex drives branch migration. In the full resolvosome a probable DNA-RuvA(4)-RuvB(12)-RuvC(2) complex forms which resolves the HJ.

The protein resides in the cytoplasm. The catalysed reaction is ATP + H2O = ADP + phosphate + H(+). Its function is as follows. The RuvA-RuvB-RuvC complex processes Holliday junction (HJ) DNA during genetic recombination and DNA repair, while the RuvA-RuvB complex plays an important role in the rescue of blocked DNA replication forks via replication fork reversal (RFR). RuvA specifically binds to HJ cruciform DNA, conferring on it an open structure. The RuvB hexamer acts as an ATP-dependent pump, pulling dsDNA into and through the RuvAB complex. RuvB forms 2 homohexamers on either side of HJ DNA bound by 1 or 2 RuvA tetramers; 4 subunits per hexamer contact DNA at a time. Coordinated motions by a converter formed by DNA-disengaged RuvB subunits stimulates ATP hydrolysis and nucleotide exchange. Immobilization of the converter enables RuvB to convert the ATP-contained energy into a lever motion, pulling 2 nucleotides of DNA out of the RuvA tetramer per ATP hydrolyzed, thus driving DNA branch migration. The RuvB motors rotate together with the DNA substrate, which together with the progressing nucleotide cycle form the mechanistic basis for DNA recombination by continuous HJ branch migration. Branch migration allows RuvC to scan DNA until it finds its consensus sequence, where it cleaves and resolves cruciform DNA. The chain is Holliday junction branch migration complex subunit RuvB from Burkholderia multivorans (strain ATCC 17616 / 249).